The primary structure comprises 368 residues: D-amino-acid oxidase (368 aa).

Residues A11, S14, K35, H36, C46, S47, G51, N53, and F174 each contribute to the FAD site. Residues C230 and C285 are joined by a disulfide bond. Residues Y244, Y260, and R308 each contribute to the (R)-lactate site. The anthranilate site is built by Y244, Y260, and R308. Residues R308, G334, G337, Y338, and Q339 each coordinate FAD. Positions 366-368 match the Microbody targeting signal motif; the sequence is ARL.

The protein belongs to the DAMOX/DASOX family. Homotetramer. FAD serves as cofactor. Post-translationally, the disulfide bond might contribute to the high thermal stability of the protein.

The protein localises to the peroxisome matrix. It carries out the reaction a D-alpha-amino acid + O2 + H2O = a 2-oxocarboxylate + H2O2 + NH4(+). It catalyses the reaction D-alanine + O2 + H2O = pyruvate + H2O2 + NH4(+). The enzyme catalyses D-glutamate + O2 + H2O = H2O2 + 2-oxoglutarate + NH4(+). The catalysed reaction is D-serine + O2 + H2O = 3-hydroxypyruvate + H2O2 + NH4(+). It carries out the reaction D-phenylalanine + O2 + H2O = 3-phenylpyruvate + H2O2 + NH4(+). It catalyses the reaction D-arginine + O2 + H2O = 5-guanidino-2-oxopentanoate + H2O2 + NH4(+). The enzyme catalyses D-methionine + O2 + H2O = 4-methylsulfanyl-2-oxobutanoate + H2O2 + NH4(+). The catalysed reaction is D-leucine + O2 + H2O = 4-methyl-2-oxopentanoate + H2O2 + NH4(+). It carries out the reaction D-lysine + O2 + H2O = 6-amino-2-oxohexanoate + H2O2 + NH4(+). It catalyses the reaction D-valine + O2 + H2O = 3-methyl-2-oxobutanoate + H2O2 + NH4(+). The enzyme catalyses D-histidine + O2 + H2O = 3-(imidazol-5-yl)pyruvate + H2O2 + NH4(+). The catalysed reaction is D-glutamine + O2 + H2O = 2-oxoglutaramate + H2O2 + NH4(+). It carries out the reaction D-isoleucine + O2 + H2O = (R)-3-methyl-2-oxopentanoate + H2O2 + NH4(+). It catalyses the reaction D-allo-isoleucine + O2 + H2O = (S)-3-methyl-2-oxopentanoate + H2O2 + NH4(+). The enzyme catalyses D-threonine + O2 + H2O = (S)-3-hydroxy-2-oxobutanoate + H2O2 + NH4(+). The catalysed reaction is D-asparagine + O2 + H2O = 2-oxosuccinamate + H2O2 + NH4(+). It carries out the reaction D-tryptophan + O2 + H2O = indole-3-pyruvate + H2O2 + NH4(+). It catalyses the reaction D-tyrosine + O2 + H2O = 3-(4-hydroxyphenyl)pyruvate + H2O2 + NH4(+). Its activity is regulated as follows. Partially inhibited by benzoate, crotonate, and D-malate. In terms of biological role, catalyzes the oxidative deamination of D-amino acids with broad substrate specificity. Enables the organism to utilize D-amino acids as a source of nutrients. Unusually, has high activity on D-glutamate. This Talaromyces emersonii (Thermophilic fungus) protein is D-amino-acid oxidase.